A 366-amino-acid polypeptide reads, in one-letter code: N-acetyl-L-citrulline deacetylase (366 aa).

H72 and D103 together coordinate Co(2+). The active-site Proton donor/acceptor is the E130. E155 provides a ligand contact to Co(2+).

This sequence belongs to the peptidase M20A family. N-acetylcitrulline deacetylase subfamily. Forms homodimers in the crystal, but higher order oligomers may form in solution. Co(2+) serves as cofactor.

It catalyses the reaction N(2)-acetyl-L-citrulline + H2O = L-citrulline + acetate. The catalysed reaction is N(2)-acetyl-L-ornithine + H2O = L-ornithine + acetate. It functions in the pathway amino-acid biosynthesis; L-arginine biosynthesis. Catalyzes the deacetylation of N-acetyl-L-citrulline to produce L-citrulline. This is a step in an alternative arginine biosynthesis pathway. Is also able to catalyze the deacetylation of N-acetylornithine in vitro, with almost equal velocity. However, this reaction may be not relevant in vivo since Xanthomonas does not possess the canonical argF gene and cannot convert ornithine to citrulline via ArgF'. The polypeptide is N-acetyl-L-citrulline deacetylase (Xanthomonas campestris pv. campestris (strain ATCC 33913 / DSM 3586 / NCPPB 528 / LMG 568 / P 25)).